The following is a 485-amino-acid chain: uncharacterized protein (485 aa).

The Cytoplasmic segment spans residues 1-30 (MFSWANIGSNEYLPLKNDRKAYLNQWAKRS). Residues 31–51 (GLAIAAICILGILILAIVKLF) traverse the membrane as a helical segment. Residues 52 to 485 (CFKAIIFPIV…DIEQAYSKLI (434 aa)) are Extracellular-facing. An N-linked (GlcNAc...) asparagine glycan is attached at asparagine 67. The interval 74–404 (STVIVISLDG…YEPLGVHGYD (331 aa)) is phosphodiesterase. The active-site Nucleophile is the threonine 118. Residues asparagine 306, asparagine 338, asparagine 453, and asparagine 467 are each glycosylated (N-linked (GlcNAc...) asparagine).

This sequence belongs to the nucleotide pyrophosphatase/phosphodiesterase family.

The protein localises to the membrane. This is an uncharacterized protein from Schizosaccharomyces pombe (strain 972 / ATCC 24843) (Fission yeast).